The primary structure comprises 154 residues: Ascorbate-specific PTS system EIIA component (154 aa).

The region spanning 6-150 (SLAENKSIRL…QEVLDLIDRT (145 aa)) is the PTS EIIA type-2 domain. Catalysis depends on histidine 68, which acts as the Tele-phosphohistidine intermediate. Residue histidine 68 is modified to Phosphohistidine.

It localises to the cytoplasm. In terms of biological role, the phosphoenolpyruvate-dependent sugar phosphotransferase system (sugar PTS), a major carbohydrate active transport system, catalyzes the phosphorylation of incoming sugar substrates concomitantly with their translocation across the cell membrane. The enzyme II UlaABC PTS system is involved in ascorbate transport. The protein is Ascorbate-specific PTS system EIIA component (ulaC) of Shigella boydii serotype 4 (strain Sb227).